A 451-amino-acid polypeptide reads, in one-letter code: Phosphoglucosamine mutase (451 aa).

Catalysis depends on S101, which acts as the Phosphoserine intermediate. Mg(2+) contacts are provided by S101, D240, D242, and D244. Phosphoserine is present on S101.

This sequence belongs to the phosphohexose mutase family. It depends on Mg(2+) as a cofactor. Activated by phosphorylation.

The catalysed reaction is alpha-D-glucosamine 1-phosphate = D-glucosamine 6-phosphate. Its function is as follows. Catalyzes the conversion of glucosamine-6-phosphate to glucosamine-1-phosphate. This chain is Phosphoglucosamine mutase, found in Streptococcus pyogenes serotype M2 (strain MGAS10270).